Here is a 329-residue protein sequence, read N- to C-terminus: DNA-directed RNA polymerase subunit alpha (329 aa).

Residues 1–235 (MQGSVTEFLK…EQLEAFVDLR (235 aa)) are alpha N-terminal domain (alpha-NTD). Positions 249–329 (FDPILLRPVD…NWPPASIADE (81 aa)) are alpha C-terminal domain (alpha-CTD).

Belongs to the RNA polymerase alpha chain family. Homodimer. The RNAP catalytic core consists of 2 alpha, 1 beta, 1 beta' and 1 omega subunit. When a sigma factor is associated with the core the holoenzyme is formed, which can initiate transcription.

It carries out the reaction RNA(n) + a ribonucleoside 5'-triphosphate = RNA(n+1) + diphosphate. Functionally, DNA-dependent RNA polymerase catalyzes the transcription of DNA into RNA using the four ribonucleoside triphosphates as substrates. This is DNA-directed RNA polymerase subunit alpha from Cronobacter sakazakii (strain ATCC BAA-894) (Enterobacter sakazakii).